The chain runs to 190 residues: Nodulation protein L (190 aa).

The protein belongs to the transferase hexapeptide repeat family.

Acetyltransferase implicated in the O-acetylation of Nod factors. The polypeptide is Nodulation protein L (nodL) (Rhizobium leguminosarum bv. viciae).